The primary structure comprises 211 residues: Outer-membrane lipoprotein carrier protein (211 aa).

The N-terminal stretch at Met1–Ala24 is a signal peptide.

Belongs to the LolA family. Monomer.

It localises to the periplasm. Participates in the translocation of lipoproteins from the inner membrane to the outer membrane. Only forms a complex with a lipoprotein if the residue after the N-terminal Cys is not an aspartate (The Asp acts as a targeting signal to indicate that the lipoprotein should stay in the inner membrane). This chain is Outer-membrane lipoprotein carrier protein, found in Coxiella burnetii (strain CbuK_Q154) (Coxiella burnetii (strain Q154)).